We begin with the raw amino-acid sequence, 346 residues long: Porphobilinogen deaminase (346 aa).

C242 is subject to S-(dipyrrolylmethanemethyl)cysteine. The interval 317-346 (ATEPGARSGTGAVRPPETDLSNPSPMENPQ) is disordered. Positions 335-346 (DLSNPSPMENPQ) are enriched in polar residues.

It belongs to the HMBS family. Monomer. Dipyrromethane serves as cofactor.

The catalysed reaction is 4 porphobilinogen + H2O = hydroxymethylbilane + 4 NH4(+). Its pathway is porphyrin-containing compound metabolism; protoporphyrin-IX biosynthesis; coproporphyrinogen-III from 5-aminolevulinate: step 2/4. In terms of biological role, tetrapolymerization of the monopyrrole PBG into the hydroxymethylbilane pre-uroporphyrinogen in several discrete steps. In Nocardia farcinica (strain IFM 10152), this protein is Porphobilinogen deaminase.